We begin with the raw amino-acid sequence, 192 residues long: Elongation factor P (192 aa).

This sequence belongs to the elongation factor P family.

It localises to the cytoplasm. The protein operates within protein biosynthesis; polypeptide chain elongation. In terms of biological role, involved in peptide bond synthesis. Stimulates efficient translation and peptide-bond synthesis on native or reconstituted 70S ribosomes in vitro. Probably functions indirectly by altering the affinity of the ribosome for aminoacyl-tRNA, thus increasing their reactivity as acceptors for peptidyl transferase. This is Elongation factor P from Borrelia turicatae (strain 91E135).